We begin with the raw amino-acid sequence, 456 residues long: Transcription factor tau subunit sfc1 (456 aa).

Disordered stretches follow at residues 394 to 416 and 437 to 456; these read DRYS…GLNT and HEGF…IFGD. Polar residues predominate over residues 407–416; the sequence is LNDTVRGLNT. Residues 441–456 are compositionally biased toward acidic residues; it reads EDLEEIDDDYDDIFGD.

In terms of assembly, component of the TFIIIC complex including sfc1, sfc3, sfc4, sfc6 and sfc7. The subunits are organized in two globular domains, tauA and tauB, connected by a proteolysis-sensitive and flexible linker. Interacts with sfc3, sfc4 and sfc6. In terms of processing, phosphorylated.

It is found in the nucleus. In terms of biological role, TFIIIC mediates tRNA and 5S RNA gene activation by binding to intragenic promoter elements. Upstream of the transcription start site, TFIIIC assembles the initiation complex TFIIIB-TFIIIC-tDNA, which is sufficient for RNA polymerase III recruitment and function. Part of the tauA domain of TFIIIC that binds boxA DNA promoter sites of tRNA and similar genes. Participates in the interconnection of tauA with tauB via its contacts with sfc3 and sfc6. Serves as a scaffold critical for tauA-DNA spatial configuration and tauB-DNA stability. Localizes to chromatin insulator sequence without recruiting RNA polymerase III and plays a role in nuclear organization. This Schizosaccharomyces pombe (strain 972 / ATCC 24843) (Fission yeast) protein is Transcription factor tau subunit sfc1 (sfc1).